We begin with the raw amino-acid sequence, 178 residues long: Cytochrome b6-f complex iron-sulfur subunit (178 aa).

A helical membrane pass occupies residues 20–42; it reads LLTFGTATGVALGALYPVANFFM. Residues 71 to 161 form the Rieske domain; sequence NHPAGDRSLV…IDIDDDNVLV (91 aa). [2Fe-2S] cluster contacts are provided by cysteine 107, histidine 109, cysteine 125, and histidine 128. A disulfide bridge connects residues cysteine 112 and cysteine 127.

Belongs to the Rieske iron-sulfur protein family. In terms of assembly, the 4 large subunits of the cytochrome b6-f complex are cytochrome b6, subunit IV (17 kDa polypeptide, PetD), cytochrome f and the Rieske protein, while the 4 small subunits are PetG, PetL, PetM and PetN. The complex functions as a dimer. [2Fe-2S] cluster serves as cofactor.

The protein localises to the cellular thylakoid membrane. It carries out the reaction 2 oxidized [plastocyanin] + a plastoquinol + 2 H(+)(in) = 2 reduced [plastocyanin] + a plastoquinone + 4 H(+)(out). Component of the cytochrome b6-f complex, which mediates electron transfer between photosystem II (PSII) and photosystem I (PSI), cyclic electron flow around PSI, and state transitions. The polypeptide is Cytochrome b6-f complex iron-sulfur subunit (Prochlorococcus marinus (strain SARG / CCMP1375 / SS120)).